Consider the following 456-residue polypeptide: tRNA modification GTPase MnmE (456 aa).

The (6S)-5-formyl-5,6,7,8-tetrahydrofolate site is built by R24, E81, and K120. The 164-residue stretch at 216-379 (GMTVVIAGRP…LRDHLKGCMG (164 aa)) folds into the TrmE-type G domain. K(+) is bound at residue N226. Residues 226-231 (NAGKSS), 245-251 (TDIAGTT), 270-273 (DTAG), and 335-338 (NKAD) each bind GTP. S230 contributes to the Mg(2+) binding site. Residues T245, I247, and T250 each coordinate K(+). T251 contributes to the Mg(2+) binding site. K456 contributes to the (6S)-5-formyl-5,6,7,8-tetrahydrofolate binding site.

This sequence belongs to the TRAFAC class TrmE-Era-EngA-EngB-Septin-like GTPase superfamily. TrmE GTPase family. As to quaternary structure, homodimer. Heterotetramer of two MnmE and two MnmG subunits. Requires K(+) as cofactor.

It is found in the cytoplasm. In terms of biological role, exhibits a very high intrinsic GTPase hydrolysis rate. Involved in the addition of a carboxymethylaminomethyl (cmnm) group at the wobble position (U34) of certain tRNAs, forming tRNA-cmnm(5)s(2)U34. This Pseudomonas putida (strain ATCC 47054 / DSM 6125 / CFBP 8728 / NCIMB 11950 / KT2440) protein is tRNA modification GTPase MnmE.